Reading from the N-terminus, the 297-residue chain is Cytidine deaminase (297 aa).

2 consecutive CMP/dCMP-type deaminase domains span residues 50–170 (SDKE…FGPK) and 189–297 (ETES…YASL). Residue 91 to 93 (NME) participates in substrate binding. His104 provides a ligand contact to Zn(2+). The active-site Proton donor is Glu106. Zn(2+) is bound by residues Cys131 and Cys134.

Belongs to the cytidine and deoxycytidylate deaminase family. Homodimer. Requires Zn(2+) as cofactor.

It catalyses the reaction cytidine + H2O + H(+) = uridine + NH4(+). The catalysed reaction is 2'-deoxycytidine + H2O + H(+) = 2'-deoxyuridine + NH4(+). Functionally, this enzyme scavenges exogenous and endogenous cytidine and 2'-deoxycytidine for UMP synthesis. The polypeptide is Cytidine deaminase (Aliivibrio fischeri (strain ATCC 700601 / ES114) (Vibrio fischeri)).